Consider the following 947-residue polypeptide: MLQRAASNAYSWWWASHIRTKQSKWLEHNLQDMEEKVEYTLKIIDEDGDTFAKRAEMYYRKRPEIVNFVEEAFRSYRALAERYDHLSRELQSANRTIATAFPEHVQFPLEDDSDENEDYDGRPRKPPKHLHLIPKGINIPEVPDIPKKKDFRSQSMMLSRKGPADLKRNVSSAQAKREAAIVRSGLSKEEGLEEIDKLQKGILALQTEKEFVRSSYEESYERYWDLENEVTEMQKSVCNLQDEFGLGASIDDSDARTLMASTALSSCRDTLAKLEEKQKISIEEAEIEKGRITTAKERFYALRNKFEKPESDVLDEVIRTDEEEEDVVQESSYESEREDSNENLTVVKLAEKIDDLVHRVVSLETNASSHTALVKTLRSETDELHEHIRGLEEDKAALVSDATVMKQRITVLEDELRNVRKLFQKVEDQNKNLQNQFKVANRTVDDLSGKIQDVKMDEDVEGAGIFQELPVVSGSEDSRDDLKSVSTEKTKKDVIAVKESEDGERAQEEKPEIKDSFALSETASTCFGTEAEDLVTEDEDEETPNWRHLLPDGMEDREKVLLDEYTSVLRDYREVKRKLGDVEKKNREGFFELALQLRELKNAVAYKDVEIQSLRQKLDTTGKDSPHQGEGNNQLEHEQGHHETVSISPTSNFSVATTPHHQVGDVKRTPGRTKSTEVRVKFADVDDSPRTKIPTVEDKVRADIDAVLEENLEFWLRFSTSVHQIQKYQTTVQDLKSELSKLRIESKQQQESPRSSSNTAVASEAKPIYRHLREIRTELQLWLENSAVLKDELQGRYASLANIQEEIARVTAQSGGNKVSDSEISGYQAAKFHGEILNMKQENKRVSTELHSGLDRVRALKTEVERILSKLEEDLGISSATEARTTPSKSSSSGRPRIPLRSFLFGVKLKKNRQQKQSASSLFSCVSPSPGLHKQSSYSRPPGKLPE.

Positions 10-90 (YSWWWASHIR…ERYDHLSREL (81 aa)) constitute an NAB domain. The segment at 105-131 (VQFPLEDDSDENEDYDGRPRKPPKHLH) is disordered. Residues 109–118 (LEDDSDENED) are compositionally biased toward acidic residues. Coiled coils occupy residues 348–454 (KLAE…IQDV) and 568–619 (VLRD…QKLD). Basic and acidic residues-rich tracts occupy residues 618–627 (LDTTGKDSPH) and 635–644 (LEHEQGHHET). 3 disordered regions span residues 618-675 (LDTT…RTKS), 743-763 (RIESKQQQESPRSSSNTAVAS), and 911-947 (KNRQQKQSASSLFSCVSPSPGLHKQSSYSRPPGKLPE). A compositionally biased stretch (polar residues) spans 645 to 660 (VSISPTSNFSVATTPH). Residues 662-675 (QVGDVKRTPGRTKS) show a composition bias toward basic and acidic residues. Residues 722 to 809 (VHQIQKYQTT…LANIQEEIAR (88 aa)) are a coiled coil. Composition is skewed to polar residues over residues 749 to 761 (QQESPRSSSNTAV) and 915 to 927 (QKQSASSLFSCVS).

The protein belongs to the NET family. As to expression, expressed specifically in pollen.

It is found in the cell membrane. Plant-specific actin binding protein. Associates with F-actin at the plasma membrane in growing pollen tubes. May be part of a membrane-cytoskeletal adapter complex. The protein is Protein NETWORKED 2A of Arabidopsis thaliana (Mouse-ear cress).